Reading from the N-terminus, the 833-residue chain is MEGAGSRGAGPARRQGARGLGLLLLLWLLPGLAAPQDLNPRGRNVCRTPGSQVLTCCAGWRQLGDECGIAVCEGNSTCSENEVCVRPGECRCRHGYFGANCDTKCPRQFWGPDCKERCSCHPHGQCEDVTGQCTCHARRWGARCEHACQCQHGTCHPRSGACRCEPGWWGAQCASACYCSATSRCDPQTGACLCHVGWWGRSCNNQCACNSSPCEQQSGRCQCRERMFGARCDRYCQCSHGRCHPVDGTCACDPGYRGKYCREPCPAGFYGPGCRRRCGQCKGQQPCTVVEGRCLTCEPGWNGTKCDQPCATGFYGEGCGHRCPPCRDGHACNHVTGKCTHCNAGWIGDRCETKCSNGTYGEDCAFVCSDCGSGHCDFQSGRCLCSPGVHGPHCNVTCPAGLHGVDCAQACSCHEESCDPVTGACHLETNQRKGVMGAGALLTLLLGLLLSLLGCCCACRGKDSARRELTLGRKKAPQRFCGSFSRISMKLPRIPLRRQKLPKVVVAHHDLDNTLNCSFLDPPSGLEQPSPSWSSRASFSSFDTTDEGPVYCVPHEEATADSRDLEATAALTEVAAVSLEPTGTSTPGEEAAVLPASSDSERSASSVEGPSGALYARVARREARPARTRNEAGGLSLSPSPERRKPPPPDPATKPKVSWIHGKHSAAAAAPSPPPAGRKAAPSPSGRKRTPSNSSVQPPGLTEEAPGPASPTPPRARARGRGLGLSEPTDAGGPPRSAPEAASMLAAELRDKTRSLGRAEKPPPPQKAKRSVLPAATVRTASASEASGSEKAAASAPAPETPRKKTPIQKPPRKKSREAAGEPSRAGTAPGAS.

The signal sequence occupies residues 1–33 (MEGAGSRGAGPARRQGARGLGLLLLLWLLPGLA). At 34 to 433 (APQDLNPRGR…ACHLETNQRK (400 aa)) the chain is on the extracellular side. 6 EGF-like domains span residues 63–102 (LGDE…ANCD), 114–145 (CKER…ARCE), 140–174 (WGAR…AQCA), 175–204 (SACY…RSCN), 205–233 (NQCA…ARCD), and 228–262 (FGAR…KYCR). 18 disulfide bridges follow: cysteine 67–cysteine 78, cysteine 72–cysteine 90, cysteine 92–cysteine 101, cysteine 118–cysteine 126, cysteine 120–cysteine 133, cysteine 135–cysteine 144, cysteine 148–cysteine 155, cysteine 150–cysteine 162, cysteine 164–cysteine 173, cysteine 177–cysteine 185, cysteine 179–cysteine 192, cysteine 194–cysteine 203, cysteine 207–cysteine 214, cysteine 209–cysteine 221, cysteine 223–cysteine 232, cysteine 236–cysteine 243, cysteine 238–cysteine 250, and cysteine 252–cysteine 261. An N-linked (GlcNAc...) asparagine glycan is attached at asparagine 75. N-linked (GlcNAc...) asparagine glycans are attached at residues asparagine 302 and asparagine 357. In terms of domain architecture, EGF-like 7 spans 364 to 395 (CAFVCSDCGSGHCDFQSGRCLCSPGVHGPHCN). 3 disulfides stabilise this stretch: cysteine 368–cysteine 376, cysteine 371–cysteine 383, and cysteine 385–cysteine 394. An N-linked (GlcNAc...) asparagine glycan is attached at asparagine 395. Residues 434 to 454 (GVMGAGALLTLLLGLLLSLLG) form a helical membrane-spanning segment. The Cytoplasmic segment spans residues 455–833 (CCCACRGKDS…SRAGTAPGAS (379 aa)). Phosphoserine is present on residues serine 538 and serine 600. A disordered region spans residues 578 to 833 (SLEPTGTSTP…SRAGTAPGAS (256 aa)). Residue tyrosine 615 is modified to Phosphotyrosine. Over residues 619–630 (ARREARPARTRN) the composition is skewed to basic and acidic residues. Residues serine 638, serine 640, and serine 695 each carry the phosphoserine modification. The residue at position 712 (threonine 712) is a Phosphothreonine. Positions 748 to 761 (ELRDKTRSLGRAEK) are enriched in basic and acidic residues. Low complexity predominate over residues 781–798 (ASASEASGSEKAAASAPA). A compositionally biased stretch (basic residues) spans 804–816 (KKTPIQKPPRKKS).

Homophilic and heterophilic interaction via its extracellular domain. Interacts with SCARF1. The heterophilic interaction with SCARF1, which is stronger than the homophilic interaction with itself, is suppressed by the presence of SCARF1 ligand such as Ac-LDL.

The protein localises to the membrane. In terms of biological role, probable adhesion protein, which mediates homophilic and heterophilic interactions. In contrast to SCARF1, it poorly mediates the binding and degradation of acetylated low density lipoprotein (Ac-LDL). The polypeptide is Scavenger receptor class F member 2 (Scarf2) (Mus musculus (Mouse)).